The following is a 540-amino-acid chain: GMP synthase [glutamine-hydrolyzing] (540 aa).

The 194-residue stretch at 29–222 (KILIVDFGSQ…VRKVAGLTGD (194 aa)) folds into the Glutamine amidotransferase type-1 domain. The Nucleophile role is filled by Cys106. Residues His196 and Glu198 contribute to the active site. In terms of domain architecture, GMPS ATP-PPase spans 223–415 (WTMRAFREEA…LGLPEIFVGR (193 aa)). An ATP-binding site is contributed by 250-256 (SGGVDSA).

Homodimer.

It carries out the reaction XMP + L-glutamine + ATP + H2O = GMP + L-glutamate + AMP + diphosphate + 2 H(+). It participates in purine metabolism; GMP biosynthesis; GMP from XMP (L-Gln route): step 1/1. In terms of biological role, catalyzes the synthesis of GMP from XMP. In Rhodopseudomonas palustris (strain HaA2), this protein is GMP synthase [glutamine-hydrolyzing].